Reading from the N-terminus, the 825-residue chain is Taste receptor cell protein 1 (825 aa).

The first 21 residues, 1–21 (MDKQWFPAAGILLAALLVVSA), serve as a signal peptide directing secretion. Disordered stretches follow at residues 66-97 (EREP…GPSG) and 299-322 (TSPS…SASP). The span at 302–322 (SQASSLHSPRPSSASPLSASP) shows a compositional bias: low complexity.

Expression is restricted to circumvallate papillae.

This is Taste receptor cell protein 1 (Trcg1) from Mus musculus (Mouse).